The sequence spans 437 residues: Ribulose bisphosphate carboxylase-like protein (437 aa).

The Proton acceptor role is filled by lysine 176. Mg(2+) is bound by residues lysine 202, aspartate 204, and glutamate 205. Position 202 is an N6-carboxylysine (lysine 202). The active-site Proton acceptor is the histidine 293.

This sequence belongs to the RuBisCO large chain family. Type IV subfamily. As to quaternary structure, homodimer. The cofactor is Mg(2+).

Its function is as follows. May be involved in sulfur metabolism and oxidative stress response. Does not show RuBisCO activity. This chain is Ribulose bisphosphate carboxylase-like protein, found in Archaeoglobus fulgidus (strain ATCC 49558 / DSM 4304 / JCM 9628 / NBRC 100126 / VC-16).